Reading from the N-terminus, the 362-residue chain is Adenosine deaminase (362 aa).

Histidine 19 and histidine 21 together coordinate Zn(2+). Substrate is bound by residues histidine 21, aspartate 23, and glycine 181. Residue histidine 208 coordinates Zn(2+). The Proton donor role is filled by glutamate 211. Residue aspartate 300 participates in Zn(2+) binding.

Belongs to the metallo-dependent hydrolases superfamily. Adenosine and AMP deaminases family. Adenosine deaminase subfamily. Requires Zn(2+) as cofactor.

The catalysed reaction is adenosine + H2O + H(+) = inosine + NH4(+). It carries out the reaction 2'-deoxyadenosine + H2O + H(+) = 2'-deoxyinosine + NH4(+). Its function is as follows. Catalyzes the hydrolytic deamination of adenosine and 2-deoxyadenosine. This chain is Adenosine deaminase, found in Mycobacterium sp. (strain MCS).